A 494-amino-acid polypeptide reads, in one-letter code: UPF0371 protein SPy_1343/M5005_Spy1095 (494 aa).

Belongs to the UPF0371 family.

The protein is UPF0371 protein SPy_1343/M5005_Spy1095 of Streptococcus pyogenes serotype M1.